The following is a 97-amino-acid chain: Osteocalcin (97 aa).

Positions 1–18 (MKTLAFLVLCSLAAICLT) are cleaved as a signal peptide. The propeptide occupies 19–52 (SDASTGSQPASDNPADEGMFVERDQASAVVRQKR). In terms of domain architecture, Gla spans 53–93 (AAGQLSLTQLESLREVCELNLACEHMMDTEGIIAAYTAYYG). Residues Glu63, Glu67, Glu70, and Glu76 each coordinate Ca(2+). 4-carboxyglutamate is present on residues Glu63, Glu67, and Glu70. Residues Cys69 and Cys75 are joined by a disulfide bond.

Belongs to the osteocalcin/matrix Gla protein family. In terms of processing, gamma-carboxyglutamate residues are formed by vitamin K dependent carboxylation by GGCX. These residues are essential for the binding of calcium.

It is found in the secreted. The carboxylated form is one of the main organic components of the bone matrix, which constitutes 1-2% of the total bone protein. The carboxylated form binds strongly to apatite and calcium. The protein is Osteocalcin (bglap) of Sparus aurata (Gilthead sea bream).